Here is a 146-residue protein sequence, read N- to C-terminus: Large ribosomal subunit protein uL15x (146 aa).

2 stretches are compositionally biased toward basic residues: residues 1 to 14 and 21 to 30; these read MTTRFKKNRKKRGH and RIGKHRKHPG. The tract at residues 1-35 is disordered; that stretch reads MTTRFKKNRKKRGHVSAGHGRIGKHRKHPGGRGNA.

It belongs to the universal ribosomal protein uL15 family.

In Arabidopsis thaliana (Mouse-ear cress), this protein is Large ribosomal subunit protein uL15x (RPL27AC).